Reading from the N-terminus, the 122-residue chain is Large ribosomal subunit protein uL14 (122 aa).

Belongs to the universal ribosomal protein uL14 family. As to quaternary structure, part of the 50S ribosomal subunit. Forms a cluster with proteins L3 and L19. In the 70S ribosome, L14 and L19 interact and together make contacts with the 16S rRNA in bridges B5 and B8.

Functionally, binds to 23S rRNA. Forms part of two intersubunit bridges in the 70S ribosome. This chain is Large ribosomal subunit protein uL14, found in Ectopseudomonas mendocina (strain ymp) (Pseudomonas mendocina).